A 584-amino-acid chain; its full sequence is Alpha-glucosidase MAL12 (584 aa).

Aspartate 214 serves as the catalytic Nucleophile. Glutamate 276 functions as the Proton donor in the catalytic mechanism.

The protein belongs to the glycosyl hydrolase 13 family.

It catalyses the reaction Hydrolysis of terminal, non-reducing (1-&gt;4)-linked alpha-D-glucose residues with release of alpha-D-glucose.. In Saccharomyces cerevisiae (strain ATCC 204508 / S288c) (Baker's yeast), this protein is Alpha-glucosidase MAL12 (MAL12).